Consider the following 179-residue polypeptide: Deoxyuridine 5'-triphosphate nucleotidohydrolase, mitochondrial (179 aa).

Residues 1 to 41 constitute a mitochondrion transit peptide; it reads MPIEQKYFSLFSNLFKRLTTNNNNNNYLKMAPPNFETFKVK. Residues 97–99, 111–114, glycine 122, arginine 165, and 170–171 contribute to the dUTP site; these read RSG, GVID, and FG.

Belongs to the dUTPase family. Homotrimer. Mg(2+) serves as cofactor.

The protein localises to the mitochondrion. The enzyme catalyses dUTP + H2O = dUMP + diphosphate + H(+). The protein operates within pyrimidine metabolism; dUMP biosynthesis; dUMP from dCTP (dUTP route): step 2/2. In terms of biological role, this enzyme is involved in nucleotide metabolism: it produces dUMP, the immediate precursor of thymidine nucleotides and it decreases the intracellular concentration of dUTP so that uracil cannot be incorporated into DNA. The polypeptide is Deoxyuridine 5'-triphosphate nucleotidohydrolase, mitochondrial (dut) (Dictyostelium discoideum (Social amoeba)).